We begin with the raw amino-acid sequence, 251 residues long: MVDQEKETTHFGFRTVAKEQKEGMVAEVFHSVAAKYDLMNDLMSFGVHRIWKRFTVDCSGVRRGQRVLDLAGGTGDLTAKFSRLVGEQGEVILADINESMLRMGREKLRDKGIVGNVSYVQANAEALPFPDNFFDCITISFGLRNVTEKEKALRSMFRVLKPGGRLLVLEFSKPLLEPLSKAYDAYSFHILPKIGELVAQDAESYRYLAESIRMHPDQETLKGMMADAGFENVTYSNLTGGIVALHRGFKF.

Residues Thr-74, Asp-95, 123-124 (NA), and Ser-140 each bind S-adenosyl-L-methionine.

This sequence belongs to the class I-like SAM-binding methyltransferase superfamily. MenG/UbiE family.

The enzyme catalyses a 2-demethylmenaquinol + S-adenosyl-L-methionine = a menaquinol + S-adenosyl-L-homocysteine + H(+). It carries out the reaction a 2-methoxy-6-(all-trans-polyprenyl)benzene-1,4-diol + S-adenosyl-L-methionine = a 5-methoxy-2-methyl-3-(all-trans-polyprenyl)benzene-1,4-diol + S-adenosyl-L-homocysteine + H(+). It functions in the pathway quinol/quinone metabolism; menaquinone biosynthesis; menaquinol from 1,4-dihydroxy-2-naphthoate: step 2/2. Its pathway is cofactor biosynthesis; ubiquinone biosynthesis. Methyltransferase required for the conversion of demethylmenaquinol (DMKH2) to menaquinol (MKH2) and the conversion of 2-polyprenyl-6-methoxy-1,4-benzoquinol (DDMQH2) to 2-polyprenyl-3-methyl-6-methoxy-1,4-benzoquinol (DMQH2). In Yersinia pestis bv. Antiqua (strain Antiqua), this protein is Ubiquinone/menaquinone biosynthesis C-methyltransferase UbiE.